An 87-amino-acid polypeptide reads, in one-letter code: Hemocyanin alpha chain (87 aa).

Belongs to the tyrosinase family. Hemocyanin subfamily. In terms of assembly, polymer that contains six different types of chains (alpha, beta, gamma, delta, epsilon, and zeta). As to expression, hemolymph.

It is found in the secreted. The protein resides in the extracellular space. In terms of biological role, hemocyanins are copper-containing oxygen carriers occurring freely dissolved in the hemolymph of many mollusks and arthropods. This chain is Hemocyanin alpha chain, found in Tachypleus tridentatus (Japanese horseshoe crab).